Reading from the N-terminus, the 380-residue chain is Septin homolog spn4 (380 aa).

The Septin-type G domain maps to 25-298 (NGVAFTLMLC…EQYRQEQMKV (274 aa)). The interval 35–42 (GESGLGKT) is G1 motif. Residues 35–42 (GESGLGKT), Thr70, Gly96, 175–183 (KADMYTRRD), Gly231, and Arg247 each bind GTP. A G3 motif region spans residues 93–96 (DTPG). Residues 174–177 (AKAD) form a G4 motif region.

It belongs to the TRAFAC class TrmE-Era-EngA-EngB-Septin-like GTPase superfamily. Septin GTPase family. As to quaternary structure, component of the septin complex composed of two copies of each spn1, spn2, spn3 and spn4.

The protein resides in the cytoplasm. Its subcellular location is the cell cortex. Its function is as follows. Plays a role in the cell cycle. Involved in a late stage of septum formation leading to the separation of the daughter cells. The chain is Septin homolog spn4 (spn4) from Schizosaccharomyces pombe (strain 972 / ATCC 24843) (Fission yeast).